The following is a 645-amino-acid chain: 1-deoxy-D-xylulose-5-phosphate synthase 2 (645 aa).

Residues histidine 79 and 120 to 122 (GHS) each bind thiamine diphosphate. Aspartate 151 is a Mg(2+) binding site. Thiamine diphosphate contacts are provided by residues 152–153 (GS), asparagine 180, tyrosine 291, and glutamate 373. Asparagine 180 lines the Mg(2+) pocket.

Belongs to the transketolase family. DXPS subfamily. In terms of assembly, homodimer. The cofactor is Mg(2+). Thiamine diphosphate serves as cofactor.

The enzyme catalyses D-glyceraldehyde 3-phosphate + pyruvate + H(+) = 1-deoxy-D-xylulose 5-phosphate + CO2. The protein operates within metabolic intermediate biosynthesis; 1-deoxy-D-xylulose 5-phosphate biosynthesis; 1-deoxy-D-xylulose 5-phosphate from D-glyceraldehyde 3-phosphate and pyruvate: step 1/1. In terms of biological role, catalyzes the acyloin condensation reaction between C atoms 2 and 3 of pyruvate and glyceraldehyde 3-phosphate to yield 1-deoxy-D-xylulose-5-phosphate (DXP). The sequence is that of 1-deoxy-D-xylulose-5-phosphate synthase 2 from Rhodospirillum rubrum (strain ATCC 11170 / ATH 1.1.1 / DSM 467 / LMG 4362 / NCIMB 8255 / S1).